The chain runs to 602 residues: T-box transcription factor TBX15 (602 aa).

The tract at residues 46-84 (ALSPAGPLGDTEDAAAHGLEPHPDSEQSTGSDSEVLTER) is disordered. The span at 71 to 84 (EQSTGSDSEVLTER) shows a compositional bias: polar residues. The segment at residues 122–304 (LWKRFHDIGT…RNPFAKGFRD (183 aa)) is a DNA-binding region (T-box). Position 330 is a phosphothreonine (Thr-330). Disordered stretches follow at residues 338 to 369 (QKQQGGSTGTSPTTSSTGTPSPSASSHLLSPS) and 425 to 447 (QSGTTSATQPSETFMPQRTPSLI). A compositionally biased stretch (low complexity) spans 346–369 (GTSPTTSSTGTPSPSASSHLLSPS). Over residues 425-446 (QSGTTSATQPSETFMPQRTPSL) the composition is skewed to polar residues.

In terms of assembly, can form a heterodimer with TBX18.

The protein resides in the nucleus. Probable transcriptional regulator involved in the development of the skeleton of the limb, vertebral column and head. Acts by controlling the number of mesenchymal precursor cells and chondrocytes. The polypeptide is T-box transcription factor TBX15 (TBX15) (Homo sapiens (Human)).